A 118-amino-acid polypeptide reads, in one-letter code: U16-barytoxin-Tl1c (118 aa).

The N-terminal stretch at 1–16 (MKTIIVFLSFLVLVLA) is a signal peptide. A propeptide spanning residues 17 to 76 (TKFGDANEGVNREQTKEVIQNEFRGDFLNEMAAMSLLQQLEAIESALLEKEADRNSRQKR) is cleaved from the precursor. Intrachain disulfides connect C77/C92, C84/C97, and C91/C112.

This sequence belongs to the neurotoxin 14 (magi-1) family. 06 (ICK-Trit) subfamily. In terms of tissue distribution, expressed by the venom gland.

Its subcellular location is the secreted. Ion channel inhibitor. This Trittame loki (Brush-footed trapdoor spider) protein is U16-barytoxin-Tl1c.